Reading from the N-terminus, the 632-residue chain is Mitoguardin 1 (632 aa).

Residues 70–90 (PVAKKLFVVTAVSAISVIFLA) form a helical membrane-spanning segment. Phosphoserine is present on residues Ser289 and Ser293.

Belongs to the mitoguardin family. As to quaternary structure, homodimer and heterodimer; forms heterodimers with MIGA2. Interacts with PLD6/MitoPLD.

It localises to the mitochondrion outer membrane. Functionally, regulator of mitochondrial fusion: acts by forming homo- and heterodimers at the mitochondrial outer membrane and facilitating the formation of PLD6/MitoPLD dimers. May act by regulating phospholipid metabolism via PLD6/MitoPLD. This chain is Mitoguardin 1, found in Homo sapiens (Human).